The sequence spans 440 residues: UDP-N-acetylmuramoylalanine--D-glutamate ligase (440 aa).

ATP is bound at residue 113 to 119; sequence GTNGKST.

It belongs to the MurCDEF family.

Its subcellular location is the cytoplasm. It catalyses the reaction UDP-N-acetyl-alpha-D-muramoyl-L-alanine + D-glutamate + ATP = UDP-N-acetyl-alpha-D-muramoyl-L-alanyl-D-glutamate + ADP + phosphate + H(+). It participates in cell wall biogenesis; peptidoglycan biosynthesis. Its function is as follows. Cell wall formation. Catalyzes the addition of glutamate to the nucleotide precursor UDP-N-acetylmuramoyl-L-alanine (UMA). This is UDP-N-acetylmuramoylalanine--D-glutamate ligase (murD) from Buchnera aphidicola subsp. Schizaphis graminum (strain Sg).